The sequence spans 243 residues: Cell division protein FtsQ (243 aa).

Residues 1 to 19 lie on the Cytoplasmic side of the membrane; it reads MKRYNAKRKTHRNLKSIKK. A helical membrane pass occupies residues 20 to 40; the sequence is LIPTVLALLAFVSLLAGIITL. Over 41–243 the chain is Periplasmic; sequence HNPKTLPFRQ…SNGLAIQWKN (203 aa). The POTRA domain occupies 46 to 115; it reads LPFRQIKITV…NELEIQVEEQ (70 aa).

This sequence belongs to the FtsQ/DivIB family. FtsQ subfamily. In terms of assembly, part of a complex composed of FtsB, FtsL and FtsQ.

The protein resides in the cell inner membrane. Essential cell division protein. May link together the upstream cell division proteins, which are predominantly cytoplasmic, with the downstream cell division proteins, which are predominantly periplasmic. May control correct divisome assembly. The sequence is that of Cell division protein FtsQ from Coxiella burnetii (strain RSA 493 / Nine Mile phase I).